A 113-amino-acid chain; its full sequence is U11-theraphotoxin-Hhn1r (113 aa).

The first 21 residues, M1–A21, serve as a signal peptide directing secretion. Positions D22 to R74 are excised as a propeptide. The disordered stretch occupies residues E61–D83. Disulfide bonds link C75–C90, C82–C95, and C89–C110.

It belongs to the neurotoxin 14 (magi-1) family. 01 (HNTX-16) subfamily. As to expression, expressed by the venom gland.

The protein localises to the secreted. Functionally, probable ion channel inhibitor. This Cyriopagopus hainanus (Chinese bird spider) protein is U11-theraphotoxin-Hhn1r.